Here is a 268-residue protein sequence, read N- to C-terminus: Undecaprenyl-diphosphatase (268 aa).

Helical transmembrane passes span 4-24, 50-70, 84-104, 109-129, 144-164, 184-204, 214-234, and 245-265; these read STTLVALVLGLLEGLTEFIPV, IQLGAVLAVLTVYASKLISVI, AAVLLAFLPAVVVGVMAHGFI, FETPILIAIMLILGGIILLFV, VPLGVALKIGFFQCLAMVPGV, AAEFSFFLSMPTMAGAFAFDL, GALGEIAVGFVAAFLAAVLVV, and GYSLFGWWRIIVGSIALAALL.

It belongs to the UppP family.

The protein localises to the cell inner membrane. The enzyme catalyses di-trans,octa-cis-undecaprenyl diphosphate + H2O = di-trans,octa-cis-undecaprenyl phosphate + phosphate + H(+). Catalyzes the dephosphorylation of undecaprenyl diphosphate (UPP). Confers resistance to bacitracin. The protein is Undecaprenyl-diphosphatase of Cereibacter sphaeroides (strain ATCC 17025 / ATH 2.4.3) (Rhodobacter sphaeroides).